The primary structure comprises 144 residues: 3-hydroxyacyl-[acyl-carrier-protein] dehydratase FabZ (144 aa).

Residue histidine 51 is part of the active site.

It belongs to the thioester dehydratase family. FabZ subfamily.

The protein localises to the cytoplasm. The enzyme catalyses a (3R)-hydroxyacyl-[ACP] = a (2E)-enoyl-[ACP] + H2O. In terms of biological role, involved in unsaturated fatty acids biosynthesis. Catalyzes the dehydration of short chain beta-hydroxyacyl-ACPs and long chain saturated and unsaturated beta-hydroxyacyl-ACPs. In Enterococcus faecalis (strain ATCC 700802 / V583), this protein is 3-hydroxyacyl-[acyl-carrier-protein] dehydratase FabZ (fabZ1).